Here is a 425-residue protein sequence, read N- to C-terminus: High-affinity branched-chain amino acid transport system permease protein LivM (425 aa).

The next 11 membrane-spanning stretches (helical) occupy residues 6 to 26 (IAMA…FMGV), 45 to 65 (WQWV…RPAF), 92 to 112 (FLVA…RGTV), 120 to 140 (IYII…LLVL), 145 to 165 (FYAI…LGFW), 167 to 187 (CLPI…FPVL), 191 to 211 (GDYL…LLLN), 260 to 280 (RVIF…FVIN), 311 to 331 (IKLT…TLFA), 353 to 373 (IVVL…ILLV), and 387 to 407 (MLML…GLLP).

It belongs to the binding-protein-dependent transport system permease family. LivHM subfamily.

The protein resides in the cell inner membrane. Its function is as follows. Part of the binding-protein-dependent transport system for branched-chain amino acids. Probably responsible for the translocation of the substrates across the membrane. This Escherichia coli (strain K12) protein is High-affinity branched-chain amino acid transport system permease protein LivM (livM).